The following is a 500-amino-acid chain: Probable cytosol aminopeptidase (500 aa).

Mn(2+) contacts are provided by Lys269 and Asp274. Residue Lys281 is part of the active site. Residues Asp292, Asp351, and Glu353 each coordinate Mn(2+). The active site involves Arg355.

This sequence belongs to the peptidase M17 family. The cofactor is Mn(2+).

It is found in the cytoplasm. It carries out the reaction Release of an N-terminal amino acid, Xaa-|-Yaa-, in which Xaa is preferably Leu, but may be other amino acids including Pro although not Arg or Lys, and Yaa may be Pro. Amino acid amides and methyl esters are also readily hydrolyzed, but rates on arylamides are exceedingly low.. The enzyme catalyses Release of an N-terminal amino acid, preferentially leucine, but not glutamic or aspartic acids.. Its function is as follows. Presumably involved in the processing and regular turnover of intracellular proteins. Catalyzes the removal of unsubstituted N-terminal amino acids from various peptides. The sequence is that of Probable cytosol aminopeptidase from Acidithiobacillus ferrooxidans (strain ATCC 23270 / DSM 14882 / CIP 104768 / NCIMB 8455) (Ferrobacillus ferrooxidans (strain ATCC 23270)).